The chain runs to 896 residues: C-type lectin domain-containing protein 180 (896 aa).

The first 18 residues, 1-18 (MRHLIFTGFVLTLTALEA), serve as a signal peptide directing secretion. The region spanning 54-178 (PWGDLYQFRA…CESTSPDHHA (125 aa)) is the C-type lectin domain. The N-linked (GlcNAc...) asparagine glycan is linked to Asn133. Cys154 and Cys169 are oxidised to a cystine. Residues Asn221 and Asn235 are each glycosylated (N-linked (GlcNAc...) asparagine). 4 disordered regions span residues 243–264 (STVKFSDSEEETSSEEEESVSK), 354–436 (VKQE…LAPE), 492–519 (EKLENSKKSEEEKEELAKKDQMSTEEQK), and 557–809 (KVKA…TTKP). Over residues 250-260 (SEEETSSEEEE) the composition is skewed to acidic residues. 2 stretches are compositionally biased toward basic and acidic residues: residues 354 to 382 (VKQEKTDEKKVEDKKETLANELNDNKISE) and 395 to 406 (DMPKADIEPPKE). The segment covering 407-426 (EDCDEEGSGSGSGEEDEKDE) has biased composition (acidic residues). Residues 427 to 436 (SSEKIELAPE) are compositionally biased toward basic and acidic residues. Basic and acidic residues-rich tracts occupy residues 575–590 (KSAKEGKAEIKEKVGN), 607–663 (QNRE…ETKL), and 683–692 (EEPKSDKDSE). Positions 727-739 (STTTESTTVAVKE) are enriched in low complexity. Residues 740-768 (VPVDEIEKIAKLEAKQHTEDEKVTVETKQ) show a composition bias toward basic and acidic residues. Low complexity predominate over residues 773–809 (TPAPTTSEKTSTTAAPSTKPAEETTTTTEAPSTTTKP).

The protein localises to the secreted. The sequence is that of C-type lectin domain-containing protein 180 (clec-180) from Caenorhabditis elegans.